A 291-amino-acid chain; its full sequence is Serine hydrolase BPHL (291 aa).

Residues 1–37 (MATATVRPAAQRLRLLLSPLKSRICVPQAEPVATFGT) form the signal peptide. Residues 62–173 (AILLLPGMLG…ANAYVTEEDS (112 aa)) enclose the AB hydrolase-1 domain. Lys74 carries the post-translational modification N6-acetyllysine; alternate. Lys74 bears the N6-succinyllysine; alternate mark. N6-acetyllysine is present on residues Lys86 and Lys119. Residue Lys126 is modified to N6-acetyllysine; alternate. Lys126 is modified (N6-succinyllysine; alternate). Ser139 (nucleophile) is an active-site residue. Lys184 bears the N6-succinyllysine mark. Residue Lys191 is modified to N6-acetyllysine; alternate. At Lys191 the chain carries N6-succinyllysine; alternate. An N6-acetyllysine modification is found at Lys217. Residue Glu221 coordinates Mg(2+). N6-acetyllysine is present on Lys243. The Charge relay system role is filled by Asp244. Residues Lys260 and Lys271 each carry the N6-acetyllysine; alternate modification. Residues Lys260 and Lys271 each carry the N6-succinyllysine; alternate modification. His272 acts as the Charge relay system in catalysis.

The protein belongs to the AB hydrolase superfamily. Lipase family. Monomer. May also form homodimers.

It localises to the mitochondrion. The catalysed reaction is L-homocysteine thiolactone + H2O = L-homocysteine + H(+). The enzyme catalyses valacyclovir + H2O = acyclovir + L-valine + H(+). Functionally, specific alpha-amino acid ester serine hydrolase that prefers small, hydrophobic, and aromatic side chains and does not have a stringent requirement for the leaving group other than preferring a primary alcohol. Has homocysteine-thiolactonase activity (in vitro) and may play a significant role in the detoxification of homocysteine thiolactone in vivo. Catalyzes the hydrolytic activation of amino acid ester prodrugs of nucleoside analogs such as valacyclovir and valganciclovir, converting them into their active forms (acyclovir and ganciclovir). The chain is Serine hydrolase BPHL (Bphl) from Mus musculus (Mouse).